The sequence spans 128 residues: Aspartate 1-decarboxylase (128 aa).

The active-site Schiff-base intermediate with substrate; via pyruvic acid is Ser25. At Ser25 the chain carries Pyruvic acid (Ser). A substrate-binding site is contributed by Thr57. Tyr58 acts as the Proton donor in catalysis. 73 to 75 provides a ligand contact to substrate; that stretch reads GSA.

This sequence belongs to the PanD family. As to quaternary structure, heterooctamer of four alpha and four beta subunits. Pyruvate serves as cofactor. Is synthesized initially as an inactive proenzyme, which is activated by self-cleavage at a specific serine bond to produce a beta-subunit with a hydroxyl group at its C-terminus and an alpha-subunit with a pyruvoyl group at its N-terminus.

The protein localises to the cytoplasm. The enzyme catalyses L-aspartate + H(+) = beta-alanine + CO2. It functions in the pathway cofactor biosynthesis; (R)-pantothenate biosynthesis; beta-alanine from L-aspartate: step 1/1. In terms of biological role, catalyzes the pyruvoyl-dependent decarboxylation of aspartate to produce beta-alanine. The sequence is that of Aspartate 1-decarboxylase from Burkholderia vietnamiensis (strain G4 / LMG 22486) (Burkholderia cepacia (strain R1808)).